Here is a 496-residue protein sequence, read N- to C-terminus: Cobyric acid synthase (496 aa).

A GATase cobBQ-type domain is found at 256 to 444 (KINIAVVLLR…IHGILDNQAF (189 aa)). The Nucleophile role is filled by Cys-337. Residue His-436 is part of the active site.

Belongs to the CobB/CobQ family. CobQ subfamily.

It functions in the pathway cofactor biosynthesis; adenosylcobalamin biosynthesis. Functionally, catalyzes amidations at positions B, D, E, and G on adenosylcobyrinic A,C-diamide. NH(2) groups are provided by glutamine, and one molecule of ATP is hydrogenolyzed for each amidation. The protein is Cobyric acid synthase of Phocaeicola vulgatus (strain ATCC 8482 / DSM 1447 / JCM 5826 / CCUG 4940 / NBRC 14291 / NCTC 11154) (Bacteroides vulgatus).